The primary structure comprises 204 residues: MSTTTTVSAIRTVEEMSNITISSHPVVNEQIAILRDRSLKPSQVRSVVDEISRFLAYESTKTLKSPSVSIVPVLRSGMSMMSAFSKVLPDVPIYHIGIFREKSTLQPIEYYNKLPKKSTDTAVILDPVMATGGTANAVITTLQEWGCKNIIFVSVLASEQALTRFSNIPGVEFVIGAVDKSLDAKGYLVPGVGDIGDRLYGATA.

5-phospho-alpha-D-ribose 1-diphosphate-binding positions include arginine 75, arginine 100, and aspartate 126–threonine 134. Tyrosine 187 lines the D-ribose 5-phosphate pocket. Residues leucine 188 and glycine 193 to isoleucine 195 contribute to the uracil site. Position 194 (aspartate 194) interacts with 5-phospho-alpha-D-ribose 1-diphosphate.

It belongs to the UPRTase family. Mg(2+) is required as a cofactor.

Its subcellular location is the cytoplasm. It is found in the nucleus. It carries out the reaction UMP + diphosphate = 5-phospho-alpha-D-ribose 1-diphosphate + uracil. The protein operates within pyrimidine metabolism; UMP biosynthesis via salvage pathway; UMP from uracil: step 1/1. Its activity is regulated as follows. Allosterically activated by GTP. Functionally, catalyzes the conversion of uracil and 5-phospho-alpha-D-ribose 1-diphosphate (PRPP) to UMP and diphosphate. The chain is Putative uracil phosphoribosyltransferase urg2 from Schizosaccharomyces pombe (strain 972 / ATCC 24843) (Fission yeast).